A 473-amino-acid polypeptide reads, in one-letter code: Adenosylhomocysteinase (473 aa).

Residues Thr-64, Asp-139, and Glu-199 each coordinate substrate. Position 200–202 (Thr-200–Thr-202) interacts with NAD(+). Residues Lys-229 and Asp-233 each contribute to the substrate site. NAD(+) is bound by residues Asn-234, Gly-263–Gly-268, Glu-286, Asn-321, Ile-342–His-344, and Asn-387.

This sequence belongs to the adenosylhomocysteinase family. NAD(+) is required as a cofactor.

The protein resides in the cytoplasm. The enzyme catalyses S-adenosyl-L-homocysteine + H2O = L-homocysteine + adenosine. It participates in amino-acid biosynthesis; L-homocysteine biosynthesis; L-homocysteine from S-adenosyl-L-homocysteine: step 1/1. May play a key role in the regulation of the intracellular concentration of adenosylhomocysteine. The sequence is that of Adenosylhomocysteinase from Burkholderia thailandensis (strain ATCC 700388 / DSM 13276 / CCUG 48851 / CIP 106301 / E264).